A 421-amino-acid chain; its full sequence is ATP-dependent RNA helicase RhlB (421 aa).

The Q motif motif lies at 9-37; sequence QKFSDFALHPKVVEALEKKGFHNCTPIQA. The Helicase ATP-binding domain maps to 40 to 219; it reads LPLTLAGRDV…FEQMNNAEYI (180 aa). 53–60 provides a ligand contact to ATP; sequence AQTGTGKT. The DEAD box motif lies at 165 to 168; the sequence is DEAD. The Helicase C-terminal domain maps to 245–390; sequence RLLQTLIEEE…VSKYNPDALM (146 aa). The tract at residues 392 to 421 is disordered; that stretch reads DLPKPLRLTRPRTGNGPRRTGAPRNRRRSG. A compositionally biased stretch (low complexity) spans 402–414; that stretch reads PRTGNGPRRTGAP.

The protein belongs to the DEAD box helicase family. RhlB subfamily. In terms of assembly, component of the RNA degradosome, which is a multiprotein complex involved in RNA processing and mRNA degradation.

It is found in the cytoplasm. It carries out the reaction ATP + H2O = ADP + phosphate + H(+). In terms of biological role, DEAD-box RNA helicase involved in RNA degradation. Has RNA-dependent ATPase activity and unwinds double-stranded RNA. The protein is ATP-dependent RNA helicase RhlB of Escherichia coli (strain SMS-3-5 / SECEC).